The following is a 429-amino-acid chain: Glutamate-1-semialdehyde 2,1-aminomutase (429 aa).

Position 267 is an N6-(pyridoxal phosphate)lysine (Lys-267).

Belongs to the class-III pyridoxal-phosphate-dependent aminotransferase family. HemL subfamily. In terms of assembly, homodimer. It depends on pyridoxal 5'-phosphate as a cofactor.

Its subcellular location is the cytoplasm. It carries out the reaction (S)-4-amino-5-oxopentanoate = 5-aminolevulinate. Its pathway is porphyrin-containing compound metabolism; protoporphyrin-IX biosynthesis; 5-aminolevulinate from L-glutamyl-tRNA(Glu): step 2/2. The polypeptide is Glutamate-1-semialdehyde 2,1-aminomutase (Xanthomonas oryzae pv. oryzae (strain MAFF 311018)).